The following is an 86-amino-acid chain: Weak neurotoxin WNTX34 (86 aa).

An N-terminal signal peptide occupies residues 1–21 (MKTLLLTLVVVTIVCLDLGYS). 5 disulfides stabilise this stretch: Cys-24–Cys-45, Cys-27–Cys-32, Cys-38–Cys-63, Cys-67–Cys-78, and Cys-79–Cys-84.

It belongs to the three-finger toxin family. Ancestral subfamily. Orphan group II sub-subfamily. As to expression, expressed by the venom gland.

Its subcellular location is the secreted. In terms of biological role, binds with low affinity to muscular (alpha-1-beta-1-delta-epsilon/CHRNA1-CHRNB1-CHRND-CHRNE) and very low affinity to neuronal (alpha-7/CHRNA7) nicotinic acetylcholine receptor (nAChR). In Ophiophagus hannah (King cobra), this protein is Weak neurotoxin WNTX34.